Reading from the N-terminus, the 122-residue chain is Small ribosomal subunit protein uS13 (122 aa).

The interval 99-122 is disordered; that stretch reads RGQRTHTNARTRKGPAKAIAGKKK.

Belongs to the universal ribosomal protein uS13 family. As to quaternary structure, part of the 30S ribosomal subunit. Forms a loose heterodimer with protein S19. Forms two bridges to the 50S subunit in the 70S ribosome.

Its function is as follows. Located at the top of the head of the 30S subunit, it contacts several helices of the 16S rRNA. In the 70S ribosome it contacts the 23S rRNA (bridge B1a) and protein L5 of the 50S subunit (bridge B1b), connecting the 2 subunits; these bridges are implicated in subunit movement. Contacts the tRNAs in the A and P-sites. The sequence is that of Small ribosomal subunit protein uS13 from Sinorhizobium fredii (strain NBRC 101917 / NGR234).